The sequence spans 414 residues: Probable peptidoglycan glycosyltransferase FtsW (414 aa).

The Cytoplasmic portion of the chain corresponds to 1–12 (MRLSLPRLKMPR). A helical membrane pass occupies residues 13–33 (LPGFSILVWISTALKGWVMGS). The Periplasmic segment spans residues 34-47 (REKDTDSLIMYDRT). A helical transmembrane segment spans residues 48 to 68 (LLWLTFGLAAIGFIMVTSASM). Over 69-86 (PIGQRLTNDPFFFAKRDG) the chain is Cytoplasmic. Residues 87–107 (VYLILAFILAIITLRLPMEFW) traverse the membrane as a helical segment. At 108-111 (QRYS) the chain is on the periplasmic side. A helical membrane pass occupies residues 112–132 (ATMLLGSIILLMIVLVVGSSV). The Cytoplasmic portion of the chain corresponds to 133–174 (KGASRWIDLGLLRIQPAELTKLSLFCYIANYLVRKGDEVRNN). A helical transmembrane segment spans residues 175–194 (LRGFLKPMGVILVLAVLLLA). At 195–197 (QPD) the chain is on the periplasmic side. A helical membrane pass occupies residues 198–217 (LGTVVVLFVTTLAMLFLAGA). Residue Lys218 is a topological domain, cytoplasmic. The helical transmembrane segment at 219 to 239 (LWQFIAIIGMGISAVVLLILA) threads the bilayer. The Periplasmic portion of the chain corresponds to 240–301 (EPYRIRRVTA…PEAHTDFIFA (62 aa)). A helical transmembrane segment spans residues 302–322 (IIGEELGYVGVVLALLMVFFV). The Cytoplasmic segment spans residues 323–342 (AFRAMSIGRKALEIDHRFSG). A helical transmembrane segment spans residues 343–363 (FLACSIGIWFSFQALVNVGAA). Over 364–373 (AGMLPTKGLT) the chain is Periplasmic. Residues 374–394 (LPLISYGGSSLLIMSTAIMML) traverse the membrane as a helical segment. At 395-414 (LRIDYETRLEKAQAFVRGSR) the chain is on the cytoplasmic side.

Belongs to the SEDS family. FtsW subfamily.

Its subcellular location is the cell inner membrane. The enzyme catalyses [GlcNAc-(1-&gt;4)-Mur2Ac(oyl-L-Ala-gamma-D-Glu-L-Lys-D-Ala-D-Ala)](n)-di-trans,octa-cis-undecaprenyl diphosphate + beta-D-GlcNAc-(1-&gt;4)-Mur2Ac(oyl-L-Ala-gamma-D-Glu-L-Lys-D-Ala-D-Ala)-di-trans,octa-cis-undecaprenyl diphosphate = [GlcNAc-(1-&gt;4)-Mur2Ac(oyl-L-Ala-gamma-D-Glu-L-Lys-D-Ala-D-Ala)](n+1)-di-trans,octa-cis-undecaprenyl diphosphate + di-trans,octa-cis-undecaprenyl diphosphate + H(+). It participates in cell wall biogenesis; peptidoglycan biosynthesis. Peptidoglycan polymerase that is essential for cell division. This Escherichia coli O157:H7 protein is Probable peptidoglycan glycosyltransferase FtsW.